A 13477-amino-acid chain; its full sequence is MQLLGLLSILWMLKSSPGATGTLSTATSTSHVTFPRAEATRTALSNSPHSRYLAEWPQGVPQLASPAPGHRENAPMTLTTSPHDTLISETLLSSLVSSNTSTTPTSKFAFKVETTPPTVLVYLATTECVYPTSFIITISHPTSICVTTTQVTFTSSYTPTPVTQKPVTTVTRTYPMTTTEKGTSAMISSPSTTTARETPIVTVTPSSSVSATDTTFHTTISSTTRTTERTPLPTGSIHTTMSPTPVFTTLKTAVTSTSPITSTITSTNTVTSMTTTTSRPTATNTLSSLMSNILSSTPVPSTEMTTSHTTDTNPLSTLVTTLPTTITRSTPTSETTYPASPTSTVTDSTTEITYSTVLTGTLSPTTTLPPTSSSQQTTETPMTPTTKLVTTTTETTSQSSLNFSSSAIYSTVSTSTTAISSLPPTSGTMVTSTNIVPTADLKPELILLEVHDQRIQAKNPRYSQTPFTSSTATSPETTTLTCTNDISTESLTTAMTSTTPVISAITPKTTVTSMTTTASGPTTTNTLSSLTSSILSSTPAPNTEVITSHTTTTTPPSTLVTTLPTAIARSTPTSETTYPISPTGTVTDSMTEITYSTSMTGTWSTATTLPLTSCSLPTIETATTPTTNLGNTTTETTSHSTPSFTSSAIYSTVNISTTTISSFPPSSGTMVTFTTMNPSSLSTDISTTTLKNITQPSVGSTGFLTAATDLTSTFTVSSSSAMSTSVTPSAPSIQNKEISTLVSTTTTTSPTERMTLTSTENTPTSYILTTSPVTYSFSPSMSASSDWTTDTESISSAPAITSTLHTTAESTLAPTTTNSFTTSANMEPPSTAVATTGTGQSTFTSSTATFLETTTLTPTTDISTESFMTPMISTTPITSSMTLRNTMTSMTTAASRPTTTNTLSSLTSSILSSTPVPSTEVITSQTTNTTSPSTLVTTLPTTITTSTPTSETTYSTSPTSTVTDSTTETTYSTSITGTLSTEISLPATTSSLITKGISMTSTRNLVTTTNENTSHSTPTFTLTIHSTISTSTTAISSVPTTSGPIVTSTTMTPSSLTADIPTTTLTTIAQPSMGSTVFLTTATDLASTFTVSSSSAMSASVIPSSPSIQNTETSSLVNMTSANTPSVRPNFASTHSTLTSSLLMTFPETYSFSPSMSASNDRTTHTESISSPPASTSTLQTTAEYTLAPTTTTSFTTPRTMELPLSTVATRGTGQTTFTSPTATFSETTTLTPTTDISTESLTTAMTSPPNNVSVTSTNIVTSMTTTTSPHTTTHSFTSLTSMTLSSTPVPSTEAITSGITNTIPASTLVTTLPTPNASSVTTFETTYPNSPTGPGTNSTTKITYPITMTETSSNATSLPLISPSVSTAETAKTPTTILVTTTTKTTSHSTTSFTSSTIYSTGSTYTTAITSVPTTLGNMVTSTSRIPSSLSTDIPTSQPTTITPSSVGITGSLPMMTDLTSVYTVSSMSARLTTVIPSSPTVQNTETSSFVSMTSATTPSERPTFTSTENTPTWSLLTSFPMTHSFSSISASSAGTTHTESISSPPATTSTLHTTAESTLSPTITSFTTSTTREPPSTSVATTGTGQTTFPSSTATFPETTTLTPTIDISTESLTTAMTSTPPITSSVTPTNTVTSMTTTTSWPTASNMLSSLTGSILSSTPVPSTEVITSQTTNTTRPSTLVMTLPTTITTSTPTSETTYSTSPTSTVTDSMTETTYSTSIAGTLSTEISLPATTSSLTTKGTSTISTRNLVTTTNETTSHSTPSFTSTIHSTVSTSTTAISSVSTTSGPMVTSTTMTLSSLTTDIPTTTLTTITQPSVGSTAFLTTASGLTSTFTVSSSSAMSTSVIPSSPNIQNTETSTLVSTTIAVSPTERTTLTSTKKTLTSSALTRFPVTYPFSSSTSASSDLTTDMESISSLPAITSTLHTTAESTPAPTSITSFTTSATMEPPSSSVAATDTGQTTFTSSTATFPETITLTPNTNMSRESLMTPMTSTTPITSAITPTNTVTSMTTMTSPPTTTNSFTSLSSKILSSTPVPSTEAIISGTTNTIPPSTLVTTLPTPNASSMTTSETTYPNSPTGPVTNSMSKISYPASMTQTSSTATSLPPNSPSGSTTEIAKSPTTNLVTNAIKATSHTTTTYTSSTIYFTASTYTSAMTSVSLGTMVTSTSMTPSTVSTSIPTSQPKTVNSSSGGITGSLPMMTDLTSGYTVSSMSALPTTVIPTSLTVQNTETSIFVSMTSATTPSGRPTFTSTVNTPTRSLLTSFPTTHLFSSSMSESSAGTTHTESISSPPATTSTLHTTAESTPSCTTTTSFITSTTMEPLSTIVATTGTVKTTVTSSTATFRETTTLTSTTDISTESLMTAMTSTTRLTSAITSKTTLTSLKTTASRPTANSTLSSLTSSILSSTLVPSTDMITSHTTNLTRSSPLLATLPTTITRSTPTSETTYPTSPTSTVKGSTTSIRYSTSMTGTLSMETSLPPTSSSLPTTETATTPTTNLVTTEITSHSTPSFSSSTIHSTVSTPTTVISSGPPTSGTIVTSITVTPSSLSTDIPLTTPTTITHHSVGSTESLLTATDLTSTFTVSSSSAMSTSDIPSSPSIQNTETSSLVSMTSATIPSVRPTFTSTHNTLTSSLLTTFPGTYSFSSSMSASSDGTTHTETITSLPASTSTLHTTAESTTAHTTTTSFTTSTTMESPSSSVATTSTGQTTFSSSTATFTETTTLTPTTDFSEETLTTAMTSTPPITSSITPTNTVTSMTTMTSWPTATNTLSSLTTNILSSTPVPSTERTTSHTTNINPVSTLVTTLPTTITRSTPTSETTYPISSTSTVTESTTEITYSTTMTETSSSATSLPLTSPLVSTTETAKTPTTILVTTTTKTTSHSTTSFTSSTVYSTASTHTTAITSVPTTLGTMVTSTSRIPSSLSTDIPTSQPTTITPSSVGITGSLPMMTDLTSVYTVSSMSARPTSVIPSSPTVQNTETSIFVSMMSATTPSGGSTFTSTENTPTRSLLTSFPVTHSFSSSMSASSVGTTHTQSISSPPAITSTLHTTAESTPSPTTTMSFTTFTKMETPSSTVATTGTGQTTFTSSTATSPETNTLTPTPDISTGSFKTAVSSTPPITSSVTSTYTVTFMTTTAPLPTATNTLPSFTSSVSSSMTVPSTEAIASDTTNTTPLSTLVTIFSNSDTSSTPTSETTYPTSLTSALADSTNRITYSTSVTGTLSTVTSLRPTSPSLPTTVTATIPTTNLVTKTTKTTSHSTPSFTSVITTTKTTSHNPPSFTSRISTTEITSHSSSFTSLITTTKTTSHSTPSFTSPIATTKTSSHSSPSFTSSIATLETTSHSTPSFTSSITTNSHSTPRFSSSIATRETTSHSTSSFTPSIATTKTNSNSTPSFTSLIATTKITTHSTPSLTSLITTTETTSHSTPSFTSSMATTKTTSHSTPSFTSPIATRETTSHSTPSFTSLITTTKTTSHSTPSFTSLITIIETTSHISSFTSSIATTETTSHSTPSITSLIVTKTTSHSTPSFTSIATTETTSHSTTSFTSSTATTETTSRSTPSFTSLINTTETTSHSTPSFISLITTTETASYSTSSFSSLITTTRTTSQSTPSLTSSITTAETISYSSPSFPSLITITKSTSHSTASFSSSITTTETNLHSTPSFTSSTTTTETASHSTSSFTSSITTTKATSHSTPSFTSSIATTETTSHNTPNITTSISTTATTFHSTPRFTSSITTIETPSHGTPSFTSSITSTETTSHSSPSFISSITTTEITSHSTPRFTSSITTMETPSHSTPNFTSSITTAETTSHRTSSFTFSITNTKTTSHSTSIFTSSIITETSSHSSPSVTSAITTTETTSHNTPSYTFSIATTKNTSQSTPSFTSSIITTETIPQSTPSFTSCITTNKTIPHSTPSLTSVITTTKTTSNSIQGFTFSITPTETTSHSTPSFTSSIAATETTSHHTPSFNSVIATSETNSHSAPSFSSLIANTETTSHSTPSFTSLIATTETTSRSTPSYTSAITTTETTSHRTPSFTSSIATESTSPSTAIFTSSITTTETTSNSTASLTSSMTTTETTSHSTPSLTSSMTATETTSHSTPSFTSLIITTETTSHSTPSLTSLITSTETTSHSTPSLTSLITTTETTSHSTPSFTSSITITESISYSNPGFNSSITTTETTSHHTPNFPSSITNTETTSQSTSNFTYSTTTTKTTSHGTPSFTSSNTTTEMTSHSTPSFTSSITTTETTSHSTLNFTCLITTTNSTSHSPPSFTSVSTTTETTSHSTPIFTSSITTTESTSHSTPSFTSSITGIKTISHNTPSFSSLITATETISHSTPSFSSLITTTETISHSTPSFTSLITSTETASHSSPSFTSSITTIETTSHSTPSLTSLITTTKTTSQSPPSFTSSIISTEAASHSTPSFTSSITTTETPSHSTHSFTSLIAITEIISHSTPGLSSSIATTETTSHSTLRFTSVIASTETISYSTPSLNSPITTTEITSHSTPSFNSSITTTETLSHSTPSLTSAITNTETMSHSIPGFTSLITTTETTSNSSPSFTSSITNTKTTSYSPPGFTSSIPATETTSRSPPGFTSSITTTETTSHSTSSLTSSITTKKTISYSPSSFTSSITTTESPSHSTPSLTSLITATKSTTHNPPSFTSAITTTGNTSHSTPIFTSSIATTESTSHSNPSFTSSITSTKSISHSTPSFSSLITTTETTSQSSSSLSSLITTTKYTPYNPPSFTSAITTTGITSHSTPIFTSSITTTETTSHNTSTLTSSITTTETASHSTSSFTSSITSTETTSHSTPSLTSSITATGTTSHSTPSFTSLITITESTSHSTTSFTSSITTTETTSHSTPSFTSLIATTEIISHSTPSYTSSIATTETPSHSTPSFPFSVMTTETISHSTPSLNSAIITTESMSHSIPGFASLITTSETTSHSLPSFTSSSTTTETPSHSPPGFSSSIATSKTISSCPPRFTSAITTTETTSHSTPRFTSAIASTKITSQSTPSLTSLITTTGTSSHSTLGLSSSIATTETTSHSTASFTSSIATTETTSHNTPGFTSLIVTTETSSQSTTSFTSSITTTETTSHTTASITSSITTTEIISRSTPSYTSSIATTETPSHITPSFTSTITTSESTSHSNPSLTSAITTTETRSHSPPIFTSSITTTETTSHNTPSFTSSITTTETTTRSLPGFTFSIATTKTTSHSPPSFTSLITTTETPSHSNPSFTSFITTTESTSHSLPGFTSVIATTKTTLHSTPIFTSSITTAETTSHNPPGFTFLIPTTETISHSPPSFTSSITIIETHSHSNPSFTSLITTTKSTSQTPLGFTSAIATTGITPHSTPIFTSLVATTESTSHSTPSFTSLITSTETISQSTPSFSSLMTATETTSHSTPSLTSLITTIKSASKNPPTFTSAIATTGITSRSTPIFTSSITNTESTSRSTPSFTFSTTSTETTSHSTPSFTSSITTIETTSHSTPSVTYSITTTRTTSHNTPSFTSFIITTESTFHSTTSFASSITTTDNTSHSMPSFTSSIATTEIISHSTPSFPSSITNTETISHRTPSLTSAITTTETMSYSIPGFISSITTTETTSHLPPRFTSLITTTKTTSHSPPSVTSLITRTETTSHSPPSFTSSSTTTETPSHSTPGFSSSIATSKTTSTSPLRFTFVIGTTKTTSYSTPRFTSVIASTKTTSHSTPSLTSLITTTGTSSHSTLGLSSSIVTTETTSHSTASFTSSIATTETVSQNTPGFTSSIATTEITSHSTPSFTSSITTMETTSQSAPSFTSLITVTGSTSHSTASFTSSITTTETTSYSTPSITSSITTTERTSHSTPSYTSSIATRETPSHTVPSFTSSITTTESTSHSNPSLTSAITTTETRSHSPPIFTSSITIIETTSHSTASFTSSMTTTETTSLSPPGFTFSISTTEITSHSTPSFTSSITTTETTSQSSPSFTSLITITGSTSHSTASFTSSITTTETTSHSTRSITSSITTTKRTSHSSLSYTSSIATSETPSHTVPSFTSSITTTDSTSHSNPSLTSAITTTETRSHSPPIFTSSITTIETTSHSTPSFTSLMTTTETTSLSPPAFTFSISTTETNSHSPPSFTSSIATTETPSHSPPSFTSLITTTESTSHSPLSFTSVITTTESTSHSTPSFTSSIATTETTSHTPPSFTSLITTTETPSHSNPSFTSLITATESTSHSPPSFTSAIATTGITSHSTPIFTSLIATTDSTSHSTPSFTSSITSTETISHSTPSFSSLITATKTTSHSTPSLTSLITTTKSTPHNASSFTSVSATTGITSRSTPIFTSSIATTDSTSHSTPSLTSLVTSTETASHSTPSFTSLITTIEATSHSTPSLTSSITTTGTTSHSTPSFTYLTTITESTSHSTPSLTSAITTTETMSHSILGFTPSIISPSTPSYISLIATTETPSHSTPSFPSSITTTQSASHSTPSLTSAISTTEAMSHSIPVFTSLITTTETTSHLPPRFTSLITTTKTTSHSPPSFTALITSTKTTSHSTPSFTSSIATTETTSHSPPSFTSSSTTTETHSHSTPGFSSSIATSKTTSTSPPRFTFAIATTKTTLHSTPRFTLAIASTKTTSHSTPSLTSLITTIETTSHCTPSLTSSITTSGTISHSTPSFTSLITITESTSHSTTSFPSSITTTETTSHSTPSFTSLIATTEIISHSTPSYTSSIATTETPSHSTPSFPFSITTTETIPHSTPSLNSAITTTETMSHSIPGFASSITTSETTSPFPPRFTSLITTTKTTSHSPPSFTASLTSTEATSHSPLSFTSVIASTKITSQSTPSLTSLITTTGTSSHNTLGLSSSVDTTKTTSHSTASFTSLIATTETTSHNTPGFTSSIATTEITSHSTPSFTSSITTMETTSRSSPSFTSLITITGSTSHSTASFTSSITTTETTSHSTPSITSSVTTAERTSHSTPSYAFSIATSETPSHTVPSFTSLITTTESTSHSNPSLTSAITTTETRSHSPPIFTSLITIIETTSHSTRSFTSSITTTVTTSHSPPGFTFSIPTTETTSHSPPSFTSSISITETPSHSPPSFTSFITTTKSTSHGPLSFSSVITTTETTSHSAPSFTSSIATAETTSHSPPGFTFWIPTTETTSHSPPSFTSLITATETASHSNPSSTSSITTTESTSHSPPRSTSAIATTGITSHSTPIFTSSIATTESTSHSTASFTSSITSTETISHSTPSFSSLITATKTTSHSTPSLTSLITTTKSTSQNPPSFTSVIATAGITSRSTPAFTSSITTTESTSQSTPSFTFSTTSTETTSHSTPSLTYLITTTRNNSHSTPSFTSLITITESTSHNTASFTSSITTTGNTSHSMPSFTSSIATTEIISHSTPSYTSSITTTETPSHSSPSFPSTITSTETISHRTPSLTSAITTTETMSHSIPGFISSITITETTSHLSPRFTSLITTTETISHSPPSFTSLTNSTETTSHSPPSFTSSSTTTETPSHSTPGFSSSIATSKTTSTSPPRFTFVIATTKTTSHSTPRFTSVIASTETTSHSTPSLNSLITTTGTSSHSTLGLSSSVTTTKTTSHSTPRFTSVIASTETTSHSTPSLNSLITTTGTSSHSTLGLSSSVTTTKTTSHSTPRFTSVIASTETTSHSTPSLNSLITTTGTSSHSTLGLSSSVTTTKTTSHSTASFTSSIATTETTSQNTPGFTSSIATTEITSHSPPSFTSSSTTTETPSHSTPGFSSSIATSKTTSTSPLRFTFVIGTTKTTSYSTPRFTSVIASTKTTSHSTPSLTSLITTTGTSSHSTFGLSSSIATTETTSHSTASFTSSIATTETMSQNIPGFTSSIATTEITSHSTPSFTSSITTTETTSQSSPSFTSLITITGSTSHSTASFTSSITTTETTSHSTRSITSSITTTKRTSHSTPSYTSSIATSETPSHTVPSFTSLITTTDSTSHSNPSLTSAITTTETRSHSPPIFTSSITTIETTSHSTPSFTSLMTTTETTSLSPPAFTFSISTTETNSHSPPSFTSSIATTETPSHSPPSFTSLITTTESTSHSPLSFTSVITTTESTSHSTPSFTSSIATTETTSHTPPSFTSLITTTETPSHSNPSFTSLITATESTSHSPPSFTSAIATTGITSHSTPIFTSLIATTDSTSHSTPSFTSSITSTETISHSTPSFSSLITATKTTSHSTPSLTSLITTTKSTPHNASSFTSVSATTGITSRSTPIFTSSIATTDSTSHSTPSLTSLVTSTETASHSTPSFTSLITTIEATSHSTPSLTSSITTTGTTSHSTPSFTYLTTITESTSHSTPSLTSAITTTETMSHSILGFTPSIISPSTPSYISLIATTETPSHSTPSFPSSITTTQSASHSTPSLTSAISTTEAMSHSIPVFTSLITTTETTSHLPPRFTSLITTTKTTSHSPPSFTALITSTKTTSHSTPSFTSSIATTETTSHSPPSFTSSSTTTETHSHSTPGFSSSIATSKTTSTSPPRFTFAIATTKTTLHSTPRFTLAIASTKTTSHSTPSLTSLITTIETTSHCTPSLTSSITTSGTISHSTPSFTSLITITESTSHSTTSFPSSITTTETTSHSTPSFTSLIATTEIISHSTPSYTSSIATTETPSHSTPSFPFSITTTETIPHSTPSLNSAITTTETMSHSIPGFASSITTSETTSPFPPRFTSLITTTKTTSHSPPSFTASLTSTEATSHSPLSFTSVIASTKITSQSTPSLTSLITTTGTSSHNTLGLSSSVDTTKTTSHSTASFTSLIATTETTSHNTPGFTSSIATTEITSHSTPSFTSSITTMETTSRSSPSFTSLITITGSTSHSTASFTSSITTTETTSHSTPSITSSVTTAERTSHSTPSYAFSIATSETPSHTVPSFTSLITTTESTSHSNPSLTSAITTTETRSHSPPIFTSLITTTETTSHSTRSFTSSITTTVTTSHSPPGFTFSIPTTETTSHSPPSFTSSISITETPSHSPPSFTSFITTTKSTSHGPLSFSSVITTTETTSHSAPSFTSSIATAETTSHSPPGFTFWIPTTETTSHSPPSFTSLITATETASHSNPSSTSSITTTESTSHSPPRSTSAIATTGITSHSTPIFTSSIATTESTSHSTASFTSSITSTETISHSTPSFSSLITATKTTSHSTPSLTSLITTTKSTSQNPPSFTSAIATAGITSRSTPAFTSSITTTESTSQSTPSFTFSTTSTETTSHSTPSFTSLITTIETTSHSTPSLTYLITTTRNNSHSTPSFTSLITITESTSHNTASFTSSITTTGNTSHSMPSFTSSIATTEIISLSTPSYTSSITTTETPSHSSPSFPSSITSTETISHRTPSLTSAITTTETMSHSIPGFISSITITETTSHLSPRFTSLITTTETISHSPPSFTSLTNSTETTSHSPPSFTSSSTTTETPSHSTPGFSSSIATSKTTSTSPPRFTFVIATTKTTSHSTPRFTSVIASTETTSHSTPSLNSLITTTGTSSHSTLGLSSSVTTTKTTSHSTASFTSSIATTETTSQNTPGFTSSIATTEITSHSTPSFTSSITTTKSTSHSNPSLTSAIVTTETRSHSRPIFTSSITTTETTSHRTPSFTSSIATAETTSHSPPSFTSLITTSETPSHSNPSFTSLITTTESTSHSPPSFTSVISTTGITSHSTLIFTSLIATTKSTSHGTPSFPSSISSTETISHSTPSFSSLITATKTTSHGTPSLTSLIATTKSTPQNPSSFTSAITTRAITSRSTPIFTSSIATIEITSHSTPSFTSSITTTETTSQNSPSFTSLITITGSTSHSTASFTSSITTTETTSHSTPRITSSITTTEKTSHSTPSYTSLIATSEAPSYTVPTFTSSITTTESTSHSNPSLTSAITNTETRSHSPPIFTSLITITETTSHSPPSFTSLITSTETTSHSPPSFTSSSTTTETPSHSTPGFSSSIATSKTISTSPPRFTFAIATTKTTSHSTPKFTSVIASTKTTSQSTPSLNSLITTTGTSSHSTLSLSSLIATTETTSHTTARFSSSIATTETTSHNTPGFTSSIATTEITSDSTPSFTSSVTTTETTSQSSPSFTSLITITGSTSHSSASFTSSITTTETTSHSTPNITSSVTTTERTSHSTPSYTSSIATGETPSHTVPSFTSLITTTKSASHSNPSLSSAIITTETRSHSPPIFTSSITTTETTSHSPPSFTSLITTTETTSRSPPGFTFSISTTETTSHSPPSFTSSITTTETPSHSPPSFTSLITTTESTSHSPLSFTSSIATTESNSYSTPSFTSLITTIQATSHSTPSLPSSITTTGTTSHSPPIFTYLTTITESTSHLSTSFTSSITTNETTSHSMPSFTSSIATTEIILRSTPSYTSSIATSETPSHSTPSFPSSITTTQSISHSTPSLSSAITTTEAMSHSIPGFTSLITTAEATSHLPPRFTSLITTTKTTSHSPPSFTASITSTKTTSHSTPGFTSLIVTTETTSHSSPSFTSSSTTTEIPSHSTPGFSSSIATSKTTSTSPPRFTFAISTTKTTLHSTPRFTLVIASTKTTSHSTPSFSSFITTTETISYSTSSLTSSITTIETTSHCTPSLNSSITTSKTTSHSTPSFTSLITITESTSHSTTSFPSSITTTETTSHSTPSFTSSIATTEIISHGTPSYISSMATTKTPSQSTPSLPSLITTTETISHSTPTLTSVNTTTQTMSHSIPGFTSLITTTETTSHNIPSFSSLITTTETTSHSPPRFTSSITTTKTPSDSTPVFTPSIATSETSSHSTPGYTSSTATTETMSHSTSSFTSSITTTETTSQRSPSFTSLITITESTSHSTARFTSSITTTEIASHSTPSFTSTIATTEIISHSTPSFTSSITTTETLSHSTPSLTPVNTTTETTSNSIPGFTSSITTTKTTSHSTPSFTSSITNTKTSSHSPPGFPSSIPTTETTSHSSPSFISSITATETTSHSTSSLTSSITTNETISHSPPSTSSITTTETPSHSTPSLTSLITTTKSTSHSPSSFTSAIATMRTTSHSTPSFTSSITSPETISHSTPSLNSLITATETISRTTPSFTSLIASTDTASHSTPSFPSSITTIETTAHSTSSLTSSITTTGATSHSTPSFTSLITITEFTSHSTTSFTSSITTTETTSHSTPSITSSIATTEIISHSTPSYTSSITTTETISHSTPSLTSSITTTETISHSTTSLTSAITATETISHSIPGFTSLITTTKTTSHLPPGFTSSIPTTKTTLHNAPSFTSSITGTETTSHSPPHFTSSITRTKTTSHRPPTFTSSITTTESPSHSIPGFSSLIATIETTSTSPPRFISAIATTETTSHSTLGLNSSIANTETTSHSTPGFNPMNATSETTSHSTPSLTFPITTTETTSHSTPGLCSLITTTETTSHSTPCFTSSITTTETTSHSTLIFTSSISTTATPPDSTPSFTSSIATTENTSHSTPSFTSSITTTKTTSQSSPSFTSLITITESTSNSTASFTSSITISETTSDSIPSFTSSIATIKTPSHSTPSFTSSITTTDSISYSTPSLTSAVTTTETTSHSIPGFTSSITSTETTSHSTPSFTSLITTTETTSHSPPSFTSLTTTTETTSHSPPRFTSSITSTETTSKSTPSFTSSISTTESTSHSTARFTSAITSTKTTSHSTSGFTSSNATTETTSHSTPGFSSLIATTGTTSHSTLSFTSLITTTETPLDSTAVFTSSITTSEATSHSTAGFTSSMVTTKTTSHSTPDFTSSIASTKTTSHSTPSFTSSITTTVSISHSTPSITTSIATTEIISHSTPSYASSIATTETPSHTTPSFTSSITTTENISHSTPSLTSVVTTTETRSHSPPSFTSSITTTEINSHSTPSFTSSIATIETTSHSPPGFTSLIPTTKTTLHSPPSFTSSITTTKTTSHSTSSLTSSMPTTKTTSHSPPSFNYLITTTKTPSQSTPSFISSITSTETISHSTPSLNSLITATEIISHTMPSFTSLITSTKTASHSTPSFTSLITTIETTSHSTPSLTSSIITTGTTSQSTPSFTSLITTTESTSHSTSSFTSSITTTETTSQSTPSFTSSIAVTETPSDSTPVFTSIATSETTSHSTASFTSLISTTETTSHSTPMFTSSVATMETTSHSTPSFTSSVTTTEIISHSTPSFTSSITTTEITSHSTPSYTSSIITTKTPSHSTPSFPSSITTTETISHSTPSLTSAITTTETMSHSIPGFTSSITTTETTSYLPPRFTSSIPITETTSYSALSFTSSITSTETTSHSAPNFSSSITSTETTSHSTPSFTSAITSTETTSHSTPILTSPIATTKNISHCTPGFSSSITTTETTSHSTPSFTFSITTTETTSHSTPGFASSITTTKTTSHSTPSFTSSIATSNTTSSSTPGFTSSIATTETTSRSTPGFTSSIVTTETTSPHTPGFTSSITTTETIPQSTPTFTSLITTREMTSHSTPSLTFSITTTKSTSYSPPSFTSSITSTESTSHSTPPFTSSITTNETTSHSTPSFTTSITKTKTTSHSTPSFTSSNSITDSRSHSTPPFTSSVTTPEMTSHNTPSFMSSIITTETTSHSTPSFTSSTIHSTVSSSTTAITSPFTTAETGVTSTPSSPSSLSTDIPTTSLRTLTPLSLSTSTSLTTTTDLPSIPTDISSLPTPIHIISSSPSIQSTETSSLVGTTSPTMSTVRATLRSTENTPISSFSTSIVVTPETPTTQAPPVLMSATGTQTSPVPTTVTFGSMDSSTSTLHTLTPSTALSKIMSTSQFPIPSTHSSTLQTTPSIPSLQTSLTSTSEFTTESFTRGSTSTNAILTSFSTIIWSSTPTIIMSSSPSSASITPVFATTIHSVPSSPYIFSTENVGSASITAFPSLSSSSTTSTSPTSSSLTTALTEITPFSYISLPSTTPCPGTITITIVPASPTDPCVEMDPSTEATSPPTTPLTVFPFTTEMVTCPSSISMQTTLATHMDTSSMTPESESSIIPNASSSTGTGTVPTNTVFTSTRLPTSETWLSNNSVIPTPLPGVSTIPLTMKPSSSLPTILRTSSKSTHPSPPTARTSETSVATTQTPTTLTTCRTTPITSWMTTQSTLTTTAGTCDNGGTWEQGQCACLPGFSGDRCQLQTRCQNGGQWDGLKCQCPSTFYGSSCEFAVEQVDLDVVETEVGMEVSVDQQFSPDLNDNTSQAYRDFNKTFWNQMQKIFADMQGFTFKGVEILSLRNGSIVVDYLVLLEMPFSPQLESEYEQVKTTLKEGLQNASQDANSCQDSQTLCFKPDSIKVNNNSKTELTPEAICRRAAPTGYEEFYFPLVEATRLRCVTKCTSGVDNAIDCHQGQCVLETSGPACRCYSTDTHWFSGPRCEVAVHWRALVGGLTAGAALLVLLLLALGVRAVRSGWWGGQRRGRSWDQDRKWFETWDEEVVGTFSNWGFEDDGTDKDTNFHVALENVDTTMKVHIKRPEMTSSSV.

The signal sequence occupies residues 1–21; the sequence is MQLLGLLSILWMLKSSPGATG. Low complexity predominate over residues 219–234; sequence TISSTTRTTERTPLPT. 106 disordered regions span residues 219 to 243, 327 to 347, 360 to 383, 513 to 559, 622 to 643, 815 to 839, 923 to 968, 1154 to 1179, 1480 to 1511, 1529 to 1601, 1619 to 1638, 1692 to 1714, 1944 to 1968, 2064 to 2123, 2170 to 2197, 2275 to 2308, 2442 to 2462, 2476 to 2497, 2509 to 2537, 2591 to 2610, 2672 to 2717, 2812 to 2832, 2845 to 2867, 2922 to 2947, 3074 to 3109, 3309 to 3395, 3420 to 3481, 3545 to 3565, 3654 to 3727, 3740 to 3812, 4014 to 4047, 4067 to 4106, 4182 to 4249, 4269 to 4313, 4510 to 4530, 4557 to 4617, 4630 to 4651, 4802 to 4830, 4953 to 4986, 5128 to 5203, 5455 to 5486, 5627 to 5680, 5834 to 5908, 5957 to 5977, 5990 to 6017, 6030 to 6080, 6120 to 6150, 6172 to 6197, 6456 to 6481, 6541 to 6598, 6846 to 6867, 6946 to 6971, 6999 to 7021, 7067 to 7093, 7170 to 7206, 7225 to 7244, 7299 to 7329, 7400 to 7433, 7476 to 7532, 7578 to 7600, 7731 to 7766, 7922 to 7996, 8036 to 8066, 8088 to 8113, 8372 to 8397, 8457 to 8514, 8762 to 8783, 8862 to 8887, 8915 to 8941, 8983 to 9009, 9052 to 9122, 9141 to 9160, 9215 to 9240, 9335 to 9366, 9409 to 9465, 9566 to 9589, 9612 to 9674, 9734 to 9760, 9828 to 9859, 9883 to 9908, 9921 to 9973, 10076 to 10099, 10120 to 10166, 10189 to 10285, 10389 to 10425, 10462 to 10481, 10501 to 10537, 10640 to 10660, 10750 to 10828, 10887 to 11032, 11044 to 11065, 11276 to 11317, 11446 to 11482, 11566 to 11697, 11754 to 11779, 11818 to 11949, 12067 to 12103, 12186 to 12220, 12280 to 12323, 12364 to 12452, 12468 to 12578, 12616 to 12639, 12681 to 12700, 12785 to 12805, 12985 to 13011, and 13052 to 13086; these read TISSTTRTTERTPLPTGSIHTTMSP, TRSTPTSETTYPASPTSTVTD, GTLSPTTTLPPTSSSQQTTETPMT, SMTT…PSTL, ATTPTTNLGNTTTETTSHSTPS, TTTNSFTTSANMEPPSTAVATTGTG, TSQT…STTE, PSMSASNDRTTHTESISSPPASTSTL, SPTVQNTETSSFVSMTSATTPSERPTFTSTEN, SISA…FPET, MTSTPPITSSVTPTNTVTSM, TTSTPTSETTYSTSPTSTVTDSM, TTSATMEPPSSSVAATDTGQTTFTS, TPNA…IAKS, STSMTPSTVSTSIPTSQPKTVNSSSGGI, SSSMSESSAGTTHTESISSPPATTSTLHTTAEST, RSTPTSETTYPTSPTSTVKGS, LSMETSLPPTSSSLPTTETATT, SHSTPSFSSSTIHSTVSTPTTVISSGPPT, SAMSTSDIPSSPSIQNTETS, TSTL…FSSS, TTITRSTPTSETTYPISSTST, TMTETSSSATSLPLTSPLVSTTE, SRIPSSLSTDIPTSQPTTITPSSVGI, ETPSSTVATTGTGQTTFTSSTATSPETNTLTPTPDI, TTSH…NSNS, ITTT…SHST, STTSFTSSTATTETTSRSTPS, SITT…STTA, ITTI…TTAE, TETTSRSTPSYTSAITTTETTSHRTPSFTSSIAT, TSNSTASLTSSMTTTETTSHSTPSLTSSMTATETTSHSTP, TTET…SSIT, NSTS…PSFT, SHSTPSFNSSITTTETLSHST, TETT…STSS, YSPSSFTSSITTTESPSHSTPS, TSSFTSSITSTETTSHSTPSLTSSITATG, HSLPSFTSSSTTTETPSHSPPGFSSSIATSKTIS, YTSS…ITTT, ITNTESTSRSTPSFTFSTTSTETTSHSTPSFT, TTKT…ATSK, TTSY…HSPP, STPSFTSSITTTETTSQSSPS, HSTASFTSSITTTETTSHSTRSITSSIT, TSSI…PPIF, TTETNSHSPPSFTSSIATTETPSHSPPSFTS, TESTSHSTPSFTSSIATTETTSHTPP, TETPSHSTPSFPSSITTTQSASHSTP, TKTT…TSTS, TTGTSSHNTLGLSSSVDTTKTT, ITTTETTSHSTPSITSSVTTAERTSH, TTESTSHSNPSLTSAITTTETRS, TTETTSHSPPSFTSSISITETPSHSPP, TETASHSNPSSTSSITTTESTSHSPPRSTSAIATTGI, SHSTASFTSSITSTETISHS, FTSSITTTESTSQSTPSFTFSTTSTETTSHS, SYTSSITTTETPSHSSPSFPSTITSTETISHRTP, TETI…TTST, TGTSSHSTLGLSSSVTTTKTTSH, TEITSHSPPSFTSSSTTTETPSHSTPGFSSSIATSK, SHST…PPIF, TTESTSHSNPSLTSAITTTETRSHSPP, AETT…TTGI, FTSSITTTESTSQSTPSFTFSTTSTE, TSSITTTETPSHSSPSFPSSITSTETISHRTP, SHSTPSFTSSITTTKSTSHSNPSL, TTET…PPSF, TTSHGTPSLTSLIATTKSTPQNPSSFT, TSSITTTETTSHSTPRITSSITTTEKTSHSTP, TTTESTSHSNPSLTSAITNTETRSHS, TTSH…SKTI, SDSTPSFTSSVTTTETTSQSSPSF, ITTT…TVPS, ITTE…SPLS, TSSIATSETPSHSTPSFPSSITTTQSISHSTPSLSSA, TTKTTSHSPPSFTASITSTK, SHSSPSFTSSSTTTEIPSHSTPGFSSSIATSKTTSTS, TTSFPSSITTTETTSHSTPSF, TTTE…QRSP, TTET…SPSS, SHSTPSFTSSITSPETISHSTP, TGTE…SPSH, STTATPPDSTPSFTSSIATTENTSHSTPSFTSSITTT, TTET…PGFS, TKTTSHSTPDFTSSIASTKTTSHSTP, SIAT…HSPP, TSSFTSSITTTETTSQSTPSFTSSIAVTETPSDSTPV, PSYTSSIITTKTPSHSTPSFPSSITTTETISHSTP, TETT…STPI, TTET…TTET, EMTS…NTPS, FTTAETGVTSTPSSPSSLSTDIPT, SSPSIQSTETSSLVGTTSPT, IPSTHSSTLQTTPSIPSLQTS, TSSMTPESESSIIPNASSSTGTGTVPT, and SLPTILRTSSKSTHPSPPTARTSETSVATTQTPTT. Low complexity-rich tracts occupy residues 513-538 and 547-559; these read SMTTTASGPTTTNTLSSLTSSILSST and TSHTTTTTPPSTL. Residues 1620–1638 show a composition bias toward low complexity; it reads TSTPPITSSVTPTNTVTSM. Residues 1944–1956 show a composition bias toward polar residues; sequence TTSATMEPPSSSV. The segment covering 1957–1968 has biased composition (low complexity); sequence AATDTGQTTFTS. The span at 2066–2091 shows a compositional bias: polar residues; it reads NASSMTTSETTYPNSPTGPVTNSMSK. A compositionally biased stretch (low complexity) spans 2096 to 2107; the sequence is ASMTQTSSTATS. Positions 2113–2123 are enriched in polar residues; sequence PSGSTTEIAKS. Positions 2170–2185 are enriched in low complexity; that stretch reads STSMTPSTVSTSIPTS. Over residues 2186 to 2195 the composition is skewed to polar residues; that stretch reads QPKTVNSSSG. Low complexity-rich tracts occupy residues 2292–2308 and 2442–2458; these read SSPPATTSTLHTTAEST and RSTPTSETTYPTSPTST. Residues 2591–2603 are compositionally biased toward low complexity; it reads SAMSTSDIPSSPS. Low complexity-rich tracts occupy residues 2929-2944 and 3074-3097; these read STDIPTSQPTTITPSS and ETPSSTVATTGTGQTTFTSSTATS. The span at 3098–3109 shows a compositional bias: polar residues; the sequence is PETNTLTPTPDI. The segment covering 3309–3359 has biased composition (low complexity); the sequence is TTSHSTPSFTSPIATTKTSSHSSPSFTSSIATLETTSHSTPSFTSSITTNS. The segment covering 3360-3370 has biased composition (polar residues); that stretch reads HSTPRFSSSIA. Over residues 3371–3385 the composition is skewed to low complexity; that stretch reads TRETTSHSTSSFTPS. Residues 3386–3395 are compositionally biased toward polar residues; the sequence is IATTKTNSNS. The span at 3420–3452 shows a compositional bias: low complexity; sequence ITTTETTSHSTPSFTSSMATTKTTSHSTPSFTS. The segment covering 3453 to 3462 has biased composition (polar residues); the sequence is PIATRETTSH. The segment covering 3463–3481 has biased composition (low complexity); it reads STPSFTSLITTTKTTSHST. The span at 3740-3749 shows a compositional bias: polar residues; the sequence is ITTIETPSHG. Residues 3750 to 3785 show a composition bias toward low complexity; it reads TPSFTSSITSTETTSHSSPSFISSITTTEITSHSTP. Positions 3786–3812 are enriched in polar residues; it reads RFTSSITTMETPSHSTPNFTSSITTAE. Low complexity-rich tracts occupy residues 4020-4042 and 4067-4096; these read STPSYTSAITTTETTSHRTPSFT and TSNSTASLTSSMTTTETTSHSTPSLTSSMT. Polar residues predominate over residues 4097–4106; sequence ATETTSHSTP. Low complexity-rich tracts occupy residues 4182-4228 and 4237-4249; these read TTET…PSFT and TSHSTPSFTSSIT. Residues 4557-4574 show a composition bias toward low complexity; it reads TETTSNSSPSFTSSITNT. Polar residues predominate over residues 4575 to 4601; sequence KTTSYSPPGFTSSIPATETTSRSPPGF. The segment covering 4602–4617 has biased composition (low complexity); it reads TSSITTTETTSHSTSS. Positions 4802 to 4827 are enriched in low complexity; sequence TSSFTSSITSTETTSHSTPSLTSSIT. Residues 5137–5158 show a composition bias toward low complexity; it reads TPSHITPSFTSTITTSESTSHS. Polar residues predominate over residues 5159–5170; sequence NPSLTSAITTTE. Low complexity-rich tracts occupy residues 5174 to 5203 and 5458 to 5486; these read HSPPIFTSSITTTETTSHNTPSFTSSITTT and TESTSRSTPSFTFSTTSTETTSHSTPSFT. A compositionally biased stretch (low complexity) spans 5834–5858; sequence TTSYSTPSITSSITTTERTSHSTPS. Polar residues predominate over residues 5859 to 5874; it reads YTSSIATRETPSHTVP. Residues 5875–5889 are compositionally biased toward low complexity; it reads SFTSSITTTESTSHS. Positions 5890–5901 are enriched in polar residues; it reads NPSLTSAITTTE. Low complexity predominate over residues 6045–6059; sequence SFTSSITTTDSTSHS. A compositionally biased stretch (polar residues) spans 6060–6071; it reads NPSLTSAITTTE. Residues 6172 to 6185 are compositionally biased toward low complexity; that stretch reads TESTSHSTPSFTSS. Residues 6186 to 6197 show a composition bias toward polar residues; it reads IATTETTSHTPP. A compositionally biased stretch (low complexity) spans 6456 to 6475; sequence TETPSHSTPSFPSSITTTQS. Positions 6852–6867 are enriched in polar residues; the sequence is HNTLGLSSSVDTTKTT. Low complexity predominate over residues 6946-6965; it reads ITTTETTSHSTPSITSSVTT. The segment covering 6999 to 7018 has biased composition (polar residues); that stretch reads TTESTSHSNPSLTSAITTTE. A compositionally biased stretch (low complexity) spans 7172-7206; sequence TASHSNPSSTSSITTTESTSHSPPRSTSAIATTGI. 2 stretches are compositionally biased toward low complexity: residues 7300–7329 and 7400–7427; these read TSSITTTESTSQSTPSFTFSTTSTETTSHS and SYTSSITTTETPSHSSPSFPSTITSTET. A compositionally biased stretch (polar residues) spans 7476 to 7491; the sequence is TETISHSPPSFTSLTN. Residues 7492 to 7532 show a composition bias toward low complexity; sequence STETTSHSPPSFTSSSTTTETPSHSTPGFSSSIATSKTTST. 2 stretches are compositionally biased toward low complexity: residues 7734 to 7766 and 7922 to 7944; these read TSHSPPSFTSSSTTTETPSHSTPGFSSSIATSK and SHSTRSITSSITTTKRTSHSTPS. Positions 7945–7987 are enriched in polar residues; it reads YTSSIATSETPSHTVPSFTSLITTTDSTSHSNPSLTSAITTTE. The span at 8088 to 8101 shows a compositional bias: low complexity; it reads TESTSHSTPSFTSS. Over residues 8102–8113 the composition is skewed to polar residues; sequence IATTETTSHTPP. The segment covering 8372–8391 has biased composition (low complexity); the sequence is TETPSHSTPSFPSSITTTQS. Over residues 8768–8783 the composition is skewed to polar residues; that stretch reads HNTLGLSSSVDTTKTT. Over residues 8862–8881 the composition is skewed to low complexity; sequence ITTTETTSHSTPSITSSVTT. A compositionally biased stretch (polar residues) spans 8915–8934; sequence TTESTSHSNPSLTSAITTTE. Composition is skewed to low complexity over residues 9067 to 9081 and 9088 to 9122; these read PTTETTSHSPPSFTS and TASHSNPSSTSSITTTESTSHSPPRSTSAIATTGI. Over residues 9335 to 9360 the composition is skewed to low complexity; the sequence is TSSITTTETPSHSSPSFPSSITSTET. The segment covering 9409–9424 has biased composition (polar residues); that stretch reads TETISHSPPSFTSLTN. Composition is skewed to low complexity over residues 9425–9465, 9566–9585, and 9612–9624; these read STET…TTST, SHSTPSFTSSITTTKSTSHS, and TTETTSHRTPSFT. Residues 9625-9661 show a composition bias toward polar residues; it reads SSIATAETTSHSPPSFTSLITTSETPSHSNPSFTSLI. Positions 9662 to 9674 are enriched in low complexity; sequence TTTESTSHSPPSF. Composition is skewed to polar residues over residues 9892-9903 and 9921-9933; these read NPSLTSAITNTE and TTSHSPPSFTSLI. Over residues 9934–9973 the composition is skewed to low complexity; sequence TSTETTSHSPPSFTSSSTTTETPSHSTPGFSSSIATSKTI. The span at 10120 to 10130 shows a compositional bias: low complexity; sequence ITTTETTSHST. The span at 10131–10166 shows a compositional bias: polar residues; that stretch reads PNITSSVTTTERTSHSTPSYTSSIATGETPSHTVPS. Low complexity-rich tracts occupy residues 10196-10271 and 10394-10421; these read HSPP…SFTS and TSETPSHSTPSFPSSITTTQSISHSTPS. A compositionally biased stretch (polar residues) spans 10750-10791; it reads TTTETTSHSPPRFTSSITTTKTPSDSTPVFTPSIATSETSSH. Composition is skewed to low complexity over residues 10792–10828, 10887–10937, and 10950–11032; these read STPGYTSSTATTETMSHSTSSFTSSITTTETTSQRSP, TTET…SSIT, and PSSI…SPSS. The span at 11278–11291 shows a compositional bias: low complexity; that stretch reads TETTSHSPPHFTSS. Residues 11292–11317 show a composition bias toward polar residues; sequence ITRTKTTSHRPPTFTSSITTTESPSH. Residues 11566-11682 show a composition bias toward low complexity; the sequence is TTETTSHSIP…SHSTSGFTSS (117 aa). Composition is skewed to polar residues over residues 11683–11697 and 11754–11769; these read NATTETTSHSTPGFS and TKTTSHSTPDFTSSIA. Composition is skewed to low complexity over residues 11770–11779 and 11818–11880; these read STKTTSHSTP and SIAT…SHST. Polar residues-rich tracts occupy residues 11881 to 11896 and 11903 to 11912; these read PSFTSSIATIETTSHS and LIPTTKTTLH. Low complexity-rich tracts occupy residues 11913-11949 and 12067-12091; these read SPPSFTSSITTTKTTSHSTSSLTSSMPTTKTTSHSPP and TSSFTSSITTTETTSQSTPSFTSSI. The segment covering 12092 to 12103 has biased composition (polar residues); that stretch reads AVTETPSDSTPV. The span at 12280–12309 shows a compositional bias: low complexity; sequence TETTSHSAPNFSSSITSTETTSHSTPSFTS. Residues 12310–12323 are compositionally biased toward polar residues; that stretch reads AITSTETTSHSTPI. Positions 12364-12412 are enriched in low complexity; it reads TTETTSHSTPGFASSITTTKTTSHSTPSFTSSIATSNTTSSSTPGFTSS. The segment covering 12413–12439 has biased composition (polar residues); the sequence is IATTETTSRSTPGFTSSIVTTETTSPH. Residues 12440-12452 show a composition bias toward low complexity; sequence TPGFTSSITTTET. Residues 12468–12477 are compositionally biased toward polar residues; the sequence is EMTSHSTPSL. 6 stretches are compositionally biased toward low complexity: residues 12478–12569, 12624–12639, 12681–12692, 12794–12805, 12990–13003, and 13073–13086; these read TFSI…VTTP, TSTPSSPSSLSTDIPT, SSPSIQSTETSS, QTTPSIPSLQTS, PESESSIIPNASSS, and TSETSVATTQTPTT. The region spanning 13130 to 13163 is the EGF-like domain; that stretch reads SGDRCQLQTRCQNGGQWDGLKCQCPSTFYGSSCE. Disulfide bonds link cysteine 13134–cysteine 13140 and cysteine 13153–cysteine 13162. The region spanning 13172-13297 is the SEA domain; it reads DVVETEVGME…DSIKVNNNSK (126 aa). Residues 13381–13401 form a helical membrane-spanning segment; that stretch reads LVGGLTAGAALLVLLLLALGV.

In terms of processing, highly O-glycosylated and probably also N-glycosylated. Fetal and adult small intestine and fetal and adult colon.

Its subcellular location is the membrane. Functionally, major glycoprotein component of a variety of mucus gels. Thought to provide a protective, lubricating barrier against particles and infectious agents at mucosal surfaces. This Homo sapiens (Human) protein is Mucin-3B.